The sequence spans 283 residues: Bifunctional protein FolD (283 aa).

NADP(+) is bound by residues 159 to 161, S184, and I225; that span reads GRS.

This sequence belongs to the tetrahydrofolate dehydrogenase/cyclohydrolase family. As to quaternary structure, homodimer.

The enzyme catalyses (6R)-5,10-methylene-5,6,7,8-tetrahydrofolate + NADP(+) = (6R)-5,10-methenyltetrahydrofolate + NADPH. The catalysed reaction is (6R)-5,10-methenyltetrahydrofolate + H2O = (6R)-10-formyltetrahydrofolate + H(+). Its pathway is one-carbon metabolism; tetrahydrofolate interconversion. Its function is as follows. Catalyzes the oxidation of 5,10-methylenetetrahydrofolate to 5,10-methenyltetrahydrofolate and then the hydrolysis of 5,10-methenyltetrahydrofolate to 10-formyltetrahydrofolate. The polypeptide is Bifunctional protein FolD (Methanoculleus marisnigri (strain ATCC 35101 / DSM 1498 / JR1)).